A 227-amino-acid chain; its full sequence is Phage shock protein A homolog (227 aa).

Positions L33–L125 form a coiled coil. Positions S191 to Q211 are disordered.

It belongs to the PspA/Vipp/IM30 family.

The polypeptide is Phage shock protein A homolog (ydjF) (Bacillus subtilis (strain 168)).